The chain runs to 83 residues: Small ribosomal subunit protein bS16 (83 aa).

Belongs to the bacterial ribosomal protein bS16 family.

This chain is Small ribosomal subunit protein bS16, found in Shewanella amazonensis (strain ATCC BAA-1098 / SB2B).